The following is a 289-amino-acid chain: MENSSIVKSPNPTIEEQRNEIEKLKNLTGIEEVHVDGAKVNKRKRTFDEQSEITKDYIEYDFSKIEDTKGGYLLEEKKVEDLREKPAERELREQEERQKKLRLAPLNLDPETAPKCFECDSIELDTKYFDIFHCRVCHTCREKYPDKYSLLTKTECKLDYLLTEPELQDQELLPRLLKANPHQQGWSNMMLYLRYQVEEFAKKKWGSMEALDAEFERREVQKKEMKEKKFEKQLLELRKRTRTSNYSRMSIREKRKHVHSYDEEFEKPNEPGVIVQRCKCGLEIEQLEI.

Zn(2+) contacts are provided by cysteine 116, cysteine 119, cysteine 137, and cysteine 140. The segment at 116–140 (CFECDSIELDTKYFDIFHCRVCHTC) is a zinc-finger region.

This sequence belongs to the XPA family. Interacts with hrq1.

It localises to the nucleus. Involved in nucleotide excision repair (NER). Functional in repair of ultraviolet radiation induced damages and in mitotic mutation avoidance. Binds damaged DNA. Binds specifically to base-base mismatches or small insertion/deletion loops with unpaired nucleotides. Maintains GT repeat stability. Functions as a part of the short-patch excision repair system. The sequence is that of DNA repair protein rad14 from Schizosaccharomyces pombe (strain 972 / ATCC 24843) (Fission yeast).